A 431-amino-acid chain; its full sequence is Glucose-1-phosphate adenylyltransferase (431 aa).

Residues Y108, G174, 189–190, and S207 contribute to the alpha-D-glucose 1-phosphate site; that span reads EK.

It belongs to the bacterial/plant glucose-1-phosphate adenylyltransferase family. Homotetramer.

It carries out the reaction alpha-D-glucose 1-phosphate + ATP + H(+) = ADP-alpha-D-glucose + diphosphate. It functions in the pathway glycan biosynthesis; glycogen biosynthesis. Its function is as follows. Involved in the biosynthesis of ADP-glucose, a building block required for the elongation reactions to produce glycogen. Catalyzes the reaction between ATP and alpha-D-glucose 1-phosphate (G1P) to produce pyrophosphate and ADP-Glc. The chain is Glucose-1-phosphate adenylyltransferase from Actinobacillus succinogenes (strain ATCC 55618 / DSM 22257 / CCUG 43843 / 130Z).